An 830-amino-acid chain; its full sequence is MVEEENIRVVRCGGSELNFRRAVFSADSKYIFCVSGDFVKVYSTVTEECVHILHGHRNLVTGIQLNPNNHLQLYSCSLDGTIKLWDYIDGILIKTFIVGCKLHALFTLAQAEDSVFVIVNKEKPDIFQLVSVKLPKSSSQEVEAKELSFVLDYINQSPKCIAFGNEGVYVAAVREFYLSVYFFKKKTTSRFTLSSSRNKKHAKNNFTCVACHPTEDCIASGHMDGKIRLWRNFYDDKKYTYTCLHWHHDMVMDLAFSVTGTSLLSGGRESVLVEWRDATEKNKEFLPRLGATIEHISVSPAGDLFCTSHSDNKIIIIHRNLEASAVIQGLVKDRSIFTGLMIDPRTKALVLNGKPGHLQFYSLQSDKQLYNLDIIQQEYINDYGLIQIELTKAAFGCFGNWLATVEQRQEKETELELQMKLWMYNKKTQGFILNTKINMPHEDCITALCFCNAEKSEQPTLVTASKDGYFKVWILTDDSDIYKKAVGWTCDFVGSYHKYQATNCCFSEDGSLLAVSFEEIVTIWDSVTWELKCTFCQRAGKIRHLCFGRLTCSKYLLGATENGILCCWNLLSCALEWNAKLNVRVMEPDPNSENIAAISQSSVGSDLFVFKPSEPRPLYIQKGISREKVQWGVFVPRDVPESFTSEAYQWLNRSQFYFLTKSQSLLTFSTKSPEEKLTPTSKQLLAEESLPTTPFYFILGKHRQQQDEKLNETLENELVQLPLTENIPAISELLHTPAHVLPSAAFLCSMFVNSLLLSKETKSAKEIPEDVDMEEEKESEDSDEENDFTEKVQDTSNTGLGEDIIHQLSKSEEKELRKFRKIDYSWIAAL.

9 WD repeats span residues 4–43 (EENI…KVYS), 47–86 (EECV…KLWD), 90–131 (GILI…QLVS), 145–184 (KELS…YFFK), 193–231 (LSSS…RLWR), 237–276 (KKYT…VEWR), 279–318 (TEKN…IIIH), 324–362 (SAVI…QFYS), and 376–423 (QQEY…KLWM). Lys-123 participates in a covalent cross-link: Glycyl lysine isopeptide (Lys-Gly) (interchain with G-Cter in SUMO2). Residue Lys-427 forms a Glycyl lysine isopeptide (Lys-Gly) (interchain with G-Cter in SUMO2) linkage. WD repeat units follow at residues 430 to 474 (GFIL…KVWI), 487 to 525 (GWTC…TIWD), 529 to 569 (WELK…CCWN), and 574 to 611 (ALEW…FVFK). Lys-466 carries the post-translational modification N6-acetyllysine. Phosphoserine occurs at positions 664 and 672. Lys-676 is covalently cross-linked (Glycyl lysine isopeptide (Lys-Gly) (interchain with G-Cter in SUMO2)). Residues 763-806 (SAKEIPEDVDMEEEKESEDSDEENDFTEKVQDTSNTGLGEDIIH) form a disordered region. A compositionally biased stretch (acidic residues) spans 769-787 (EDVDMEEEKESEDSDEEND). A phosphoserine mark is found at Ser-779, Ser-782, Ser-796, and Ser-811.

As to quaternary structure, component of the proposed t-UTP subcomplex of the ribosomal small subunit (SSU) processome. SSU processome is composed of more than 70 proteins and the RNA chaperone small nucleolar RNA (snoRNA) U3.

Its subcellular location is the nucleus. The protein resides in the nucleolus. Its function is as follows. Ribosome biogenesis factor. Part of the small subunit (SSU) processome, first precursor of the small eukaryotic ribosomal subunit. During the assembly of the SSU processome in the nucleolus, many ribosome biogenesis factors, an RNA chaperone and ribosomal proteins associate with the nascent pre-rRNA and work in concert to generate RNA folding, modifications, rearrangements and cleavage as well as targeted degradation of pre-ribosomal RNA by the RNA exosome. Involved in nucleolar processing of pre-18S ribosomal RNA. Required for optimal pre-ribosomal RNA transcription by RNA polymerase I. In Homo sapiens (Human), this protein is WD repeat-containing protein 75.